A 577-amino-acid polypeptide reads, in one-letter code: Proton channel OTOP3 (577 aa).

Residues 1-46 (MASQTSAPAEPAPMPSPEAKTTEGASSYDQADMETKHAGSPCPPKQ) form a disordered region. Over 1–69 (MASQTSAPAE…RDRQAQKAGQ (69 aa)) the chain is Cytoplasmic. A helical membrane pass occupies residues 70–90 (LFSGLLALNVVFLGGAFICSM). Over 91–100 (IFNKVSVTLG) the chain is Extracellular. A helical membrane pass occupies residues 101 to 124 (DVWILLAALKVLSLLWLLYYTVGT). Residues 125–140 (TRKPHAVLYRDPHAGP) lie on the Cytoplasmic side of the membrane. A helical transmembrane segment spans residues 141–162 (IWVRGSLVLFGSCTVCLNIFRM). Residues 163-174 (GYDVSHIHCKSE) lie on the Extracellular side of the membrane. The helical transmembrane segment at 175–198 (VELIFPAIEIVFMIIQTWVLWRHC) threads the bilayer. Over 199-206 (KDCVQVQT) the chain is Cytoplasmic. The chain crosses the membrane as a helical span at residues 207-229 (NFTRCGLMLTLATNLLMWVLAVT). Over 230 to 276 (NDSMHREIEAELDALMEKFSGNGTNTCMCLNTTVCEVFRKGYLMLYP) the chain is Extracellular. A helical transmembrane segment spans residues 277–293 (FSTEYCLICCAVLFVMW). Residues 294 to 319 (KNVSRSLAAHTGAHPNRSPFRLHGTI) are Cytoplasmic-facing. The chain crosses the membrane as a helical span at residues 320–339 (FGPLLGLLALVAGVCVFVLF). Topologically, residues 340–353 (QIEASGPDIARQYF) are extracellular. Residues 354 to 376 (TLYYAFYVAVLPTMSLACLAGTA) traverse the membrane as a helical segment. Residues 377–394 (IHGLEERELDTLKNPTRS) are Cytoplasmic-facing. The chain crosses the membrane as a helical span at residues 395 to 416 (LDVVLLMGAALGQMGIAYFSIV). Residues 417–427 (AIVATQPHELL) are Extracellular-facing. A helical transmembrane segment spans residues 428 to 450 (NQLILAYSLLLILQHITQNLFII). The Cytoplasmic portion of the chain corresponds to 451–510 (EGLHRRPLWEPAVSGVMEKQDVELPRRGSLRELGQDLRRASRAYIHSFSHLNWKRRMLKE). The chain crosses the membrane as a helical span at residues 511 to 528 (ISLFLILCNITLWMMPAF). Residues 529-547 (GIHPEFENGLEKDFYGYRT) lie on the Extracellular side of the membrane. The chain crosses the membrane as a helical span at residues 548–570 (WFTIVNFGLPLGVFYRMHSVGGL). Over 571-577 (VEVYLGA) the chain is Cytoplasmic.

It belongs to the otopetrin family. As to quaternary structure, homodimer. Expressed in epidermis, small intestine, stomach and retina.

The protein localises to the cell membrane. The enzyme catalyses H(+)(in) = H(+)(out). With respect to regulation, activated by extracellular acidification. Activated by Zn(2+) under non-acidic conditions. Functionally, proton-selective channel gated by extracellular protons. In Mus musculus (Mouse), this protein is Proton channel OTOP3.